A 466-amino-acid chain; its full sequence is Argininosuccinate lyase (466 aa).

3 residues coordinate 2-(N(omega)-L-arginino)succinate: Ser27, Asn114, and Thr159. The active-site Proton acceptor is His160. Residue Ser281 is the Proton donor of the active site. Residues Asn289, Tyr321, Gln326, and Lys329 each coordinate 2-(N(omega)-L-arginino)succinate.

The protein belongs to the lyase 1 family. Argininosuccinate lyase subfamily. Homotetramer. As to expression, eye lens.

It carries out the reaction 2-(N(omega)-L-arginino)succinate = fumarate + L-arginine. The protein operates within amino-acid biosynthesis; L-arginine biosynthesis; L-arginine from L-ornithine and carbamoyl phosphate: step 3/3. Its function is as follows. Delta crystallin, the principal crystallin in embryonic lens, is found only in birds and reptiles. This protein also functions as an enzymatically active argininosuccinate lyase. The protein is Argininosuccinate lyase (ASL) of Anser anser anser (Western greylag goose).